The primary structure comprises 665 residues: UvrABC system protein B (665 aa).

Positions 25-412 (ASIEGGNRYQ…ENRIVEQVIR (388 aa)) constitute a Helicase ATP-binding domain. ATP is bound at residue 38–45 (GATGTGKT). The short motif at 91-114 (YYDYYQPEAYIPVTDTYIEKTAAI) is the Beta-hairpin element. The 155-residue stretch at 429–583 (QIDDLLGEIK…VAYNKLHGIT (155 aa)) folds into the Helicase C-terminal domain. The UVR domain occupies 626-661 (PNLIDKLEAQMKEASKKLEFEEAAKLRDRIKQLRDK).

Belongs to the UvrB family. As to quaternary structure, forms a heterotetramer with UvrA during the search for lesions. Interacts with UvrC in an incision complex.

The protein localises to the cytoplasm. The UvrABC repair system catalyzes the recognition and processing of DNA lesions. A damage recognition complex composed of 2 UvrA and 2 UvrB subunits scans DNA for abnormalities. Upon binding of the UvrA(2)B(2) complex to a putative damaged site, the DNA wraps around one UvrB monomer. DNA wrap is dependent on ATP binding by UvrB and probably causes local melting of the DNA helix, facilitating insertion of UvrB beta-hairpin between the DNA strands. Then UvrB probes one DNA strand for the presence of a lesion. If a lesion is found the UvrA subunits dissociate and the UvrB-DNA preincision complex is formed. This complex is subsequently bound by UvrC and the second UvrB is released. If no lesion is found, the DNA wraps around the other UvrB subunit that will check the other stand for damage. This is UvrABC system protein B from Nostoc sp. (strain PCC 7120 / SAG 25.82 / UTEX 2576).